We begin with the raw amino-acid sequence, 535 residues long: CTP synthase (535 aa).

The amidoligase domain stretch occupies residues 1-270 (MSKNTKYVFV…DRLVCEKLGL (270 aa)). Serine 16 is a binding site for CTP. Serine 16 contacts UTP. 17-22 (SLGKGI) is a binding site for ATP. Tyrosine 57 serves as a coordination point for L-glutamine. Residue aspartate 74 participates in ATP binding. Mg(2+) is bound by residues aspartate 74 and glutamate 144. CTP is bound by residues 151–153 (DIE), 191–196 (KTKPTQ), and lysine 227. UTP is bound by residues 191-196 (KTKPTQ) and lysine 227. One can recognise a Glutamine amidotransferase type-1 domain in the interval 295–535 (KIALVGKYVE…GFVGAALNNK (241 aa)). Glycine 357 provides a ligand contact to L-glutamine. Cysteine 384 acts as the Nucleophile; for glutamine hydrolysis in catalysis. L-glutamine is bound by residues 385–388 (LGMQ), glutamate 408, and arginine 465. Active-site residues include histidine 510 and glutamate 512.

The protein belongs to the CTP synthase family. In terms of assembly, homotetramer.

The enzyme catalyses UTP + L-glutamine + ATP + H2O = CTP + L-glutamate + ADP + phosphate + 2 H(+). It catalyses the reaction L-glutamine + H2O = L-glutamate + NH4(+). The catalysed reaction is UTP + NH4(+) + ATP = CTP + ADP + phosphate + 2 H(+). The protein operates within pyrimidine metabolism; CTP biosynthesis via de novo pathway; CTP from UDP: step 2/2. With respect to regulation, allosterically activated by GTP, when glutamine is the substrate; GTP has no effect on the reaction when ammonia is the substrate. The allosteric effector GTP functions by stabilizing the protein conformation that binds the tetrahedral intermediate(s) formed during glutamine hydrolysis. Inhibited by the product CTP, via allosteric rather than competitive inhibition. Catalyzes the ATP-dependent amination of UTP to CTP with either L-glutamine or ammonia as the source of nitrogen. Regulates intracellular CTP levels through interactions with the four ribonucleotide triphosphates. The polypeptide is CTP synthase (Clostridium perfringens (strain ATCC 13124 / DSM 756 / JCM 1290 / NCIMB 6125 / NCTC 8237 / Type A)).